We begin with the raw amino-acid sequence, 141 residues long: Putative pre-16S rRNA nuclease (141 aa).

It belongs to the YqgF nuclease family.

It localises to the cytoplasm. Functionally, could be a nuclease involved in processing of the 5'-end of pre-16S rRNA. This chain is Putative pre-16S rRNA nuclease, found in Pseudomonas putida (strain ATCC 47054 / DSM 6125 / CFBP 8728 / NCIMB 11950 / KT2440).